We begin with the raw amino-acid sequence, 90 residues long: uncharacterized protein (90 aa).

The first 20 residues, 1–20 (MEKLFVLVFALTLLAFSSEA), serve as a signal peptide directing secretion. Positions 31–50 (QLLRSRRQDRPSKPGFPDEP) are disordered.

The protein resides in the secreted. This is an uncharacterized protein from Rattus norvegicus (Rat).